A 207-amino-acid chain; its full sequence is Guanylate kinase (207 aa).

Residues 6–185 form the Guanylate kinase-like domain; sequence GLLIVLSGPS…AKNRIQCIVE (180 aa). 13–20 is a binding site for ATP; the sequence is GPSGVGKG.

The protein belongs to the guanylate kinase family.

The protein localises to the cytoplasm. The enzyme catalyses GMP + ATP = GDP + ADP. In terms of biological role, essential for recycling GMP and indirectly, cGMP. The protein is Guanylate kinase of Staphylococcus aureus (strain USA300).